A 518-amino-acid polypeptide reads, in one-letter code: 2-isopropylmalate synthase (518 aa).

A Pyruvate carboxyltransferase domain is found at 4–266; that stretch reads INFFDTTLRD…ESTIQLNEIK (263 aa). 4 residues coordinate Mn(2+): D13, H201, H203, and N237. Residues 391–518 are regulatory domain; that stretch reads DFISLQVHYG…GLSKQAAVGS (128 aa).

Belongs to the alpha-IPM synthase/homocitrate synthase family. LeuA type 1 subfamily. As to quaternary structure, homodimer. The cofactor is Mn(2+).

It is found in the cytoplasm. The catalysed reaction is 3-methyl-2-oxobutanoate + acetyl-CoA + H2O = (2S)-2-isopropylmalate + CoA + H(+). It functions in the pathway amino-acid biosynthesis; L-leucine biosynthesis; L-leucine from 3-methyl-2-oxobutanoate: step 1/4. Catalyzes the condensation of the acetyl group of acetyl-CoA with 3-methyl-2-oxobutanoate (2-ketoisovalerate) to form 3-carboxy-3-hydroxy-4-methylpentanoate (2-isopropylmalate). The protein is 2-isopropylmalate synthase of Bacillus licheniformis (strain ATCC 14580 / DSM 13 / JCM 2505 / CCUG 7422 / NBRC 12200 / NCIMB 9375 / NCTC 10341 / NRRL NRS-1264 / Gibson 46).